The primary structure comprises 371 residues: Terpene cyclase 6 (371 aa).

Residues Asp144, Asn266, Ser270, and Glu274 each contribute to the Mg(2+) site. A D(D/E)XX(D/E) motif motif is present at residues 144-148; that stretch reads DDVME. An NSE motif motif is present at residues 266 to 274; it reads NDLYSYDKE. Positions 352–359 match the WxxxxxRY motif motif; the sequence is HHATLGRY. (2E,6E)-farnesyl diphosphate contacts are provided by Arg358 and Tyr359.

This sequence belongs to the terpene synthase family. Homodimer. Mg(2+) is required as a cofactor.

The enzyme catalyses (2E,6E)-farnesyl diphosphate + H2O = (-)-alpha-acorenol + diphosphate. It functions in the pathway sesquiterpene biosynthesis. Terpene cyclase that catalyzes the cyclization of farnesyl diphosphate (FPP) to the spirocyclic sesquiterpene alpha-acorenol. This chain is Terpene cyclase 6, found in Gibberella fujikuroi (strain CBS 195.34 / IMI 58289 / NRRL A-6831) (Bakanae and foot rot disease fungus).